The following is a 176-amino-acid chain: Orotate phosphoribosyltransferase (176 aa).

5-phospho-alpha-D-ribose 1-diphosphate is bound by residues Arg90, Lys91, Lys94, and 116-124 (EDVTTTGGS). Orotate-binding residues include Thr120 and Arg148.

This sequence belongs to the purine/pyrimidine phosphoribosyltransferase family. PyrE subfamily. In terms of assembly, homodimer. It depends on Mg(2+) as a cofactor.

The catalysed reaction is orotidine 5'-phosphate + diphosphate = orotate + 5-phospho-alpha-D-ribose 1-diphosphate. It functions in the pathway pyrimidine metabolism; UMP biosynthesis via de novo pathway; UMP from orotate: step 1/2. Catalyzes the transfer of a ribosyl phosphate group from 5-phosphoribose 1-diphosphate to orotate, leading to the formation of orotidine monophosphate (OMP). This is Orotate phosphoribosyltransferase from Methanocaldococcus jannaschii (strain ATCC 43067 / DSM 2661 / JAL-1 / JCM 10045 / NBRC 100440) (Methanococcus jannaschii).